We begin with the raw amino-acid sequence, 109 residues long: Aquaporin-2 (109 aa).

Topologically, residues 1-6 (SIAFSR) are cytoplasmic. The chain crosses the membrane as a helical span at residues 7–27 (AVLSEFLATLLFVFFGLGSAL). At 28 to 35 (NWPQALPS) the chain is on the extracellular side. Residues 36-54 (VLQIAMAFGLAIGTLVQTL) traverse the membrane as a helical segment. Residues 55-59 (GHISG) are Cytoplasmic-facing. Positions 60–69 (AHINPAVTIA) form an intramembrane region, discontinuously helical. The short motif at 63-65 (NPA) is the NPA 1 element. The Cytoplasmic portion of the chain corresponds to 70-80 (CLVGCHVSFLR). A helical transmembrane segment spans residues 81-102 (ALFYLAAQLLGAVAGAALLHEL). Residues 103–109 (TPPDIRG) are Extracellular-facing.

Belongs to the MIP/aquaporin (TC 1.A.8) family. Homotetramer. In terms of processing, serine phosphorylation is necessary and sufficient for expression at the apical membrane. Endocytosis is not phosphorylation-dependent. N-glycosylated.

It is found in the apical cell membrane. It localises to the basolateral cell membrane. The protein resides in the cell membrane. Its subcellular location is the cytoplasmic vesicle membrane. The protein localises to the golgi apparatus. It is found in the trans-Golgi network membrane. It carries out the reaction H2O(in) = H2O(out). The enzyme catalyses glycerol(in) = glycerol(out). In terms of biological role, forms a water-specific channel that provides the plasma membranes of renal collecting duct with high permeability to water, thereby permitting water to move in the direction of an osmotic gradient. Plays an essential role in renal water homeostasis. Could also be permeable to glycerol. This Procavia capensis habessinica (Abyssinian hyrax) protein is Aquaporin-2.